We begin with the raw amino-acid sequence, 203 residues long: Large ribosomal subunit protein uL3 (203 aa).

This sequence belongs to the universal ribosomal protein uL3 family. As to quaternary structure, part of the 50S ribosomal subunit. Forms a cluster with proteins L14 and L19.

Its function is as follows. One of the primary rRNA binding proteins, it binds directly near the 3'-end of the 23S rRNA, where it nucleates assembly of the 50S subunit. The chain is Large ribosomal subunit protein uL3 from Christiangramia forsetii (strain DSM 17595 / CGMCC 1.15422 / KT0803) (Gramella forsetii).